A 1350-amino-acid chain; its full sequence is ABC transporter G family member 45 (1350 aa).

Residues 1-23 (MAAAVELTGDGGTTAETRWLSPP) are disordered. Residues 85 to 357 (AACAHMCTTR…FETMGFKCPS (273 aa)) form the ABC transporter 1 domain. Position 118–125 (118–125 (GAPGSGKT)) interacts with ATP. The 214-residue stretch at 434 to 647 (NIFKACFSRE…AQNAVALNEF (214 aa)) folds into the ABC transmembrane type-2 1 domain. 6 consecutive transmembrane segments (helical) span residues 453–473 (VHIF…TLFL), 491–511 (ALFM…AMTI), 523–543 (ILAL…LPIS), 557–577 (VIGY…LFAM), 597–617 (MANM…GFVI), and 683–703 (ICVS…IFAL). The region spanning 749–1001 (LVFDHINYFV…NMIKYFEAIP (253 aa)) is the ABC transporter 2 domain. 794–801 (GITGAGKT) lines the ATP pocket. The region spanning 1074-1288 (AQCMACLWKQ…TVYGLMFSQL (215 aa)) is the ABC transmembrane type-2 2 domain. A run of 7 helical transmembrane segments spans residues 1099–1119 (INTF…GSTI), 1126–1146 (FNIL…NCSI), 1181–1201 (LPYM…MIGF), 1208–1228 (FFWF…YGMM), 1238–1258 (IAAG…GFII), 1269–1289 (WVYW…SQLG), and 1322–1342 (LVTS…FLSI).

This sequence belongs to the ABC transporter superfamily. ABCG family. PDR (TC 3.A.1.205) subfamily.

It is found in the membrane. Its function is as follows. May be a general defense protein. This Oryza sativa subsp. japonica (Rice) protein is ABC transporter G family member 45.